Here is a 312-residue protein sequence, read N- to C-terminus: Aspartate carbamoyltransferase catalytic subunit (312 aa).

Residues R55 and T56 each coordinate carbamoyl phosphate. K83 is an L-aspartate binding site. Carbamoyl phosphate-binding residues include R105, H133, and Q136. R166 and R220 together coordinate L-aspartate. Positions 261 and 262 each coordinate carbamoyl phosphate.

The protein belongs to the aspartate/ornithine carbamoyltransferase superfamily. ATCase family. In terms of assembly, heterododecamer (2C3:3R2) of six catalytic PyrB chains organized as two trimers (C3), and six regulatory PyrI chains organized as three dimers (R2).

It catalyses the reaction carbamoyl phosphate + L-aspartate = N-carbamoyl-L-aspartate + phosphate + H(+). The protein operates within pyrimidine metabolism; UMP biosynthesis via de novo pathway; (S)-dihydroorotate from bicarbonate: step 2/3. In terms of biological role, catalyzes the condensation of carbamoyl phosphate and aspartate to form carbamoyl aspartate and inorganic phosphate, the committed step in the de novo pyrimidine nucleotide biosynthesis pathway. In Prosthecochloris aestuarii (strain DSM 271 / SK 413), this protein is Aspartate carbamoyltransferase catalytic subunit.